Here is an 880-residue protein sequence, read N- to C-terminus: Valine--tRNA ligase (880 aa).

The 'HIGH' region motif lies at Pro-51–His-61. The 'KMSKS' region signature appears at Lys-529–Thr-533. Lys-532 is a binding site for ATP. A coiled-coil region spans residues Met-815 to Lys-854.

This sequence belongs to the class-I aminoacyl-tRNA synthetase family. ValS type 1 subfamily. Monomer.

It localises to the cytoplasm. It catalyses the reaction tRNA(Val) + L-valine + ATP = L-valyl-tRNA(Val) + AMP + diphosphate. In terms of biological role, catalyzes the attachment of valine to tRNA(Val). As ValRS can inadvertently accommodate and process structurally similar amino acids such as threonine, to avoid such errors, it has a 'posttransfer' editing activity that hydrolyzes mischarged Thr-tRNA(Val) in a tRNA-dependent manner. In Dehalococcoides mccartyi (strain CBDB1), this protein is Valine--tRNA ligase.